The primary structure comprises 276 residues: 4-hydroxy-tetrahydrodipicolinate reductase (276 aa).

16–21 (GALGKM) contacts NAD(+). Lysine 44 lines the NADP(+) pocket. NAD(+)-binding positions include 109-111 (GTT) and 135-138 (APNF). The active-site Proton donor/acceptor is histidine 165. Position 166 (histidine 166) interacts with (S)-2,3,4,5-tetrahydrodipicolinate. Lysine 169 acts as the Proton donor in catalysis. 175–176 (GT) contributes to the (S)-2,3,4,5-tetrahydrodipicolinate binding site.

It belongs to the DapB family.

The protein resides in the cytoplasm. The enzyme catalyses (S)-2,3,4,5-tetrahydrodipicolinate + NAD(+) + H2O = (2S,4S)-4-hydroxy-2,3,4,5-tetrahydrodipicolinate + NADH + H(+). The catalysed reaction is (S)-2,3,4,5-tetrahydrodipicolinate + NADP(+) + H2O = (2S,4S)-4-hydroxy-2,3,4,5-tetrahydrodipicolinate + NADPH + H(+). Its pathway is amino-acid biosynthesis; L-lysine biosynthesis via DAP pathway; (S)-tetrahydrodipicolinate from L-aspartate: step 4/4. Catalyzes the conversion of 4-hydroxy-tetrahydrodipicolinate (HTPA) to tetrahydrodipicolinate. This Thermosynechococcus vestitus (strain NIES-2133 / IAM M-273 / BP-1) protein is 4-hydroxy-tetrahydrodipicolinate reductase.